The chain runs to 185 residues: MISVNDFRTGLTISVDNALWQVLDFQHVKPGKGAAFVRSKLRNIRTGSVQEKTFRAGEKVEKAHIENRRMQYLYASGEAHVFMDNGTYEQIELGEKQIERELKFLKENMEVAIMTYQGEVLGVELPNTVELQVTETEPGIKGDTASNVTKPATLETGLVVQVPIFINEGEMLIINTGEGKYVSRA.

Belongs to the elongation factor P family.

The protein localises to the cytoplasm. The protein operates within protein biosynthesis; polypeptide chain elongation. Functionally, involved in peptide bond synthesis. Stimulates efficient translation and peptide-bond synthesis on native or reconstituted 70S ribosomes in vitro. Probably functions indirectly by altering the affinity of the ribosome for aminoacyl-tRNA, thus increasing their reactivity as acceptors for peptidyl transferase. This is Elongation factor P from Bacillus cereus (strain G9842).